A 134-amino-acid chain; its full sequence is Histone H3-like centromeric protein A (134 aa).

Over residues 1–14 (MGPRRKPQTPRRRP) the composition is skewed to basic residues. Positions 1–34 (MGPRRKPQTPRRRPSSPAPGPSRQSSSVGSQTLR) are disordered. At G2 the chain carries N,N,N-trimethylglycine. Residues S16 and S22 each carry the phosphoserine modification. Positions 34-48 (RRRQKFMWLKEIKTL) are important for flexibility of DNA ends that protrude from nucleosomes. The H3-like stretch occupies residues 35-134 (RRQKFMWLKE…RIRGFEGGLP (100 aa)). S62 is modified (phosphoserine). Residues 69-110 (CEKFSRGVDFWWQAQALLALQEAAEAFLIHLFEDAYLLSLHA) form a CATD region.

The protein belongs to the histone H3 family. As to quaternary structure, component of centromeric nucleosomes, where DNA is wrapped around a histone octamer core. The octamer contains two molecules each of H2A, H2B, CENPA and H4 assembled in one CENPA-H4 heterotetramer and two H2A-H2B heterodimers. CENPA modulates the DNA-binding characteristics of nucleosomes so that protruding DNA ends have higher flexibility than in nucleosomes containing conventional histone H3. Inhibits binding of histone H1 to nucleosomes, since histone H1 binds preferentially to rigid DNA linkers that protrude from nucleosomes. Nucleosomes containing CENPA also contain histone H2A variants such as MACROH2A and H2A.Z/H2AZ1. The CENPA-H4 heterotetramer is more compact and structurally more rigid than corresponding H3-H4 heterotetramers. Can assemble into nucleosomes that contain both CENPA and histone H3.3; these nucleosomes interact with a single CENPC chain. Heterotrimer composed of HJURP, CENPA and histone H4, where HJURP interacts with the dimer formed by CENPA and histone H4 and prevents tetramerization of CENPA and H4. Component of the CENPA-NAC complex, at least composed of CENPA, CENPC, CENPH, CENPM, CENPN, CENPT and CENPU. Interacts (via CATD domain) with HJURP; the interaction is direct and is required for its localization to centromeres. Interacts with CENPC, CENPN and CENPT; interaction is direct. Part of a centromere complex consisting of CENPA, CENPT and CENPW. Identified in centromere complexes containing histones H2A, H2B and H4, and at least CENPA, CENPB, CENPC, CENPT, CENPN, HJURP, SUPT16H, SSRP1 and RSF1. Can self-associate. The CENPA-H4 heterotetramer can bind DNA by itself (in vitro). Interacts with CDK1, PPP1CA and RBBP7. Post-translationally, poly-ADP-ribosylated by PARP1. Trimethylated by NTMT1 at the N-terminal glycine after cleavage of Met-1. Methylation is low before incorporation into nucleosomes and increases with cell cycle progression, with the highest levels in mitotic nucleosomes. In terms of processing, phosphorylated by CDK1 at Ser-62 during early mitosis; this abolishes association with chromatin and centromeres, prevents interaction with HJURP and thereby prevents premature assembly of CENPA into centromeres. Dephosphorylated at Ser-62 by PPP1CA during late mitosis.

The protein resides in the nucleus. It is found in the chromosome. The protein localises to the centromere. Its function is as follows. Histone H3-like nucleosomal protein that is specifically found in centromeric nucleosomes. Replaces conventional H3 in the nucleosome core of centromeric chromatin that serves as an assembly site for the inner kinetochore. The presence of CENPA subtly modifies the nucleosome structure and the way DNA is wrapped around the nucleosome and gives rise to protruding DNA ends that are less well-ordered and rigid compared to nucleosomes containing histone H3. May serve as an epigenetic mark that propagates centromere identity through replication and cell division. Required for recruitment and assembly of kinetochore proteins, and as a consequence required for progress through mitosis, chromosome segregation and cytokinesis. The sequence is that of Histone H3-like centromeric protein A (Cenpa) from Mus musculus (Mouse).